We begin with the raw amino-acid sequence, 156 residues long: Arginine repressor (156 aa).

It belongs to the ArgR family.

The protein localises to the cytoplasm. It functions in the pathway amino-acid biosynthesis; L-arginine biosynthesis [regulation]. Regulates arginine biosynthesis genes. This chain is Arginine repressor, found in Proteus mirabilis (strain HI4320).